The chain runs to 999 residues: MAATVRRQRPRRLLCWTLVAVLLADLLALSDTLAVMSVDLGSESMKVAIVKPGVPMEIVLNKESRRKTPVTVTLKENERFLGDSAAGMAIKNPKATLRYFQHLLGKQADNPHVALYRDRFPEHELNIDPQRQTVRFQISPQLQFSPEEVLGMVLNYSRSLAEDFAEQPIKDAVITVPAFFNQAERRAVLQAARMAGLKVLQLINDNTATALSYGVFRRKDINSTAQNVMFYDMGSGTTVCTIVTYQTVKTKEAGMQPQLQIRGVGFDRTLGGLEMELRLREHLAKLFNEQRRGQKAKDVRENPRAMAKLLREANRLKTVLSANADHMAQIEGLMDDVDFKAKVTRVESEELCADLFERVPGPVQQALQSAEMSLDEIEQVILVGGATRVPKVQEVLLKAVGKEELGKNINADEAAAMGAVYQAAALSKAFKVKPFVVRDAVIYPILVEFTREVEEEPGVRSLKHNKRVLFSRMGPYPQGKVITFNRYSHDFNFHINYGDLGFLGPEDLRVFGSQNLTTVKLKGVGESLKKYPDYESKGIKAHFNLDESGVLSLDRVESVFETLVEDSPEEESTLTKLGNTISSLFGGGTSSDAKENGTDAVQEEEESPTEGSKDEPGEQGDLKEETEAPVEDTSQPPPPEPKGDAAPEGEKPDEKESGGKSEAQKPEEKGQSGPEGVPPAPEEEKKQKPARKQKMVEEIGVELAVLDLPDLPEDELARSVKKLEDLTLRDLEKQEREKAANSLEAFIFETQDKLYQPEYQEVSTEEQREEISGKLSATSTWLEDEGFGATTVMLKEKLAELKKLCQGLFFRVEERRKWPERLSALDNLLNHSSIFLKGARLIPEMDQIFTEVEMTTLEKVINDTWAWKNATLAEQAKLPATEKPVLLSKDIEAKMMALDREVQYLLNKAKFTKPRPRPKDKNGTRTEPPLNATAGDQEEKVIPPAGQPEEAKPILEPDKEETTTEPTDSEPLELGGPGAESEPKEQTAGQKRSSKNDEL.

The signal sequence occupies residues 1 to 32 (MAATVRRQRPRRLLCWTLVAVLLADLLALSDT). Asn155, Asn222, and Asn515 each carry an N-linked (GlcNAc...) asparagine glycan. The tract at residues 564–694 (VEDSPEEEST…KKQKPARKQK (131 aa)) is disordered. Phosphoserine is present on Ser567. Residues 574-583 (LTKLGNTISS) are compositionally biased toward polar residues. N-linked (GlcNAc...) asparagine glycosylation occurs at Asn596. Basic and acidic residues-rich tracts occupy residues 611–626 (GSKDEPGEQGDLKEET) and 641–670 (PKGDAAPEGEKPDEKESGGKSEAQKPEEKG). N-linked (GlcNAc...) asparagine glycans are attached at residues Asn830, Asn862, and Asn869. The residue at position 883 (Lys883) is an N6-acetyllysine. The disordered stretch occupies residues 909–999 (AKFTKPRPRP…QKRSSKNDEL (91 aa)). N-linked (GlcNAc...) asparagine glycans are attached at residues Asn922 and Asn931. Basic and acidic residues predominate over residues 949 to 962 (EEAKPILEPDKEET). Positions 996-999 (NDEL) match the Prevents secretion from ER motif.

This sequence belongs to the heat shock protein 70 family. In terms of assembly, part of a large chaperone multiprotein complex comprising DNAJB11, HSP90B1, HSPA5, HYOU, PDIA2, PDIA4, PDIA6, PPIB, SDF2L1, UGGT1 and very small amounts of ERP29, but not, or at very low levels, CALR nor CANX.

It localises to the endoplasmic reticulum lumen. Functionally, has a pivotal role in cytoprotective cellular mechanisms triggered by oxygen deprivation. Promotes HSPA5/BiP-mediated ATP nucleotide exchange and thereby activates the unfolded protein response (UPR) pathway in the presence of endoplasmic reticulum stress. May play a role as a molecular chaperone and participate in protein folding. In Cricetulus griseus (Chinese hamster), this protein is Hypoxia up-regulated protein 1 (HYOU1).